A 121-amino-acid polypeptide reads, in one-letter code: Protein FAM241B (121 aa).

Positions 12–58 are disordered; it reads QDDDPRVRTTTQPPRGSIPRQSFFNRGHGAPPGGPGPRQQQAGARLG. The span at 19 to 35 shows a compositional bias: polar residues; it reads RTTTQPPRGSIPRQSFF. Position 33 is a phosphoserine (S33). Low complexity predominate over residues 48-58; sequence PRQQQAGARLG. At S62 the chain carries Phosphoserine. A helical membrane pass occupies residues 92–112; sequence ILLLFLLMMLGVRGLLLVGLV.

Belongs to the FAM241 family.

The protein resides in the membrane. In terms of biological role, may play a role in lysosome homeostasis. The polypeptide is Protein FAM241B (Homo sapiens (Human)).